We begin with the raw amino-acid sequence, 520 residues long: Protein U4 (520 aa).

This sequence belongs to the herpesviridae U4 family.

This Elephantid herpesvirus 1 (isolate Asian elephant/Berlin/Kiba/1998) (EIHV-1) protein is Protein U4.